The following is a 334-amino-acid chain: N-acetylmuramoyl-L-alanine amidase sle1 (334 aa).

An N-terminal signal peptide occupies residues 1-25; that stretch reads MQKKVIAAIIGTSAISAVAATQANA. The LysM 1 domain occupies 27 to 70; it reads TTHTVKPGESVWAISNKYGISIAKLKSLNNLTSNLIFPNQVLKV. Residues 71–86 show a composition bias toward low complexity; sequence SGSSNSTSNSSRPSTN. The interval 71–90 is disordered; the sequence is SGSSNSTSNSSRPSTNSGGG. One can recognise a LysM 2 domain in the interval 91–134; sequence SYYTVQAGDSLSLIASKYGTTYQNIMRLNGLNNFFIYPGQKLKV. Positions 137-156 are disordered; sequence TASSSNSTSNSSRPSTNSSG. Residues 158–201 form the LysM 3 domain; the sequence is SYYTVQAGDSLSLIASKYGTTYQNIMRLNGLNNFFIYPGQKLKV. The Peptidase C51 domain occupies 210–334; the sequence is GSTTTTNRGY…YQVNNYRYIH (125 aa).

It localises to the secreted. Its subcellular location is the cell surface. The enzyme catalyses Hydrolyzes the link between N-acetylmuramoyl residues and L-amino acid residues in certain cell-wall glycopeptides.. Peptidoglycan hydrolase involved in the splitting of the septum during cell division. The protein is N-acetylmuramoyl-L-alanine amidase sle1 (sle1) of Staphylococcus aureus (strain MRSA252).